Consider the following 587-residue polypeptide: Proline-rich protein 14 (587 aa).

Position 1 is an N-acetylmethionine (Met-1). Positions 1 to 11 (MDLPGDSSTPG) are enriched in polar residues. 3 disordered regions span residues 1-48 (MDLP…EKAS), 65-152 (VPLE…HQPT), and 181-241 (ARRA…RPRL). The segment at 1 to 135 (MDLPGDSSTP…TPRRQSRTTP (135 aa)) is sufficient for heterochromatin association in interphase and chromatin association in anaphase. The tract at residues 85–378 (SVRSQPPASP…MAKAPPPPRP (294 aa)) is required for the interaction with GRB2 and sufficient to promote the phosphorylation of AKT and cell proliferation. The interval 136 to 365 (GPDEGPSQKV…RPRPRRHTVG (230 aa)) is required for nuclear lamina association. The segment covering 200–214 (LPAPSRPSALSANPL) has biased composition (low complexity). Over residues 215–234 (ASPPPAPDPVLEPPSTPPPS) the composition is skewed to pro residues. Ser-277 carries the phosphoserine modification. Disordered regions lie at residues 290-444 (EAGQ…IGKV) and 524-587 (FRDS…PHRT). The span at 314–325 (AQDQNPSATLTK) shows a compositional bias: polar residues. The span at 337–356 (LGPPGPDPCSWPPVPAPSSR) shows a compositional bias: pro residues. Residues 398 to 410 (TSCSSTASTSSFS) show a composition bias toward low complexity. Residues 519–536 (RRTVEFRDSSLPRSRRPS) form a required for nuclear localization region. Low complexity predominate over residues 538 to 548 (GARATAGRTLP). A compositionally biased stretch (acidic residues) spans 572–581 (LLEEEEEGDQ).

Interacts (via proline-rich region) with GRB2 (via SH3 domain 2). Interacts (via N-terminus) with CBX5.

It localises to the chromosome. The protein localises to the nucleus. Its subcellular location is the nucleus lamina. It is found in the nucleoplasm. Its function is as follows. Functions in tethering peripheral heterochromatin to the nuclear lamina during interphase, possibly through the interaction with heterochromatin protein CBX5/HP1 alpha. Might play a role in reattaching heterochromatin to the nuclear lamina at mitotic exit. Promotes myoblast differentiation during skeletal myogenesis, possibly by stimulating transcription factor MyoD activity via binding to CBX5/HP1 alpha. Involved in the positive regulation of the PI3K-Akt-mTOR signaling pathway and in promoting cell proliferation, possibly via binding to GRB2. The sequence is that of Proline-rich protein 14 (PRR14) from Bos taurus (Bovine).